Here is a 343-residue protein sequence, read N- to C-terminus: Geranylgeranyl pyrophosphate synthase 1 (343 aa).

Residues K43, R46, and H75 each coordinate isopentenyl diphosphate. 2 residues coordinate Mg(2+): D82 and D86. R91 provides a ligand contact to dimethylallyl diphosphate. R92 lines the isopentenyl diphosphate pocket. Positions 169, 170, and 212 each coordinate dimethylallyl diphosphate. Position 215 (D215) interacts with Mg(2+). Dimethylallyl diphosphate contacts are provided by N219, K229, and K239.

This sequence belongs to the FPP/GGPP synthase family. Mg(2+) is required as a cofactor.

The enzyme catalyses isopentenyl diphosphate + dimethylallyl diphosphate = (2E)-geranyl diphosphate + diphosphate. It catalyses the reaction isopentenyl diphosphate + (2E)-geranyl diphosphate = (2E,6E)-farnesyl diphosphate + diphosphate. The catalysed reaction is isopentenyl diphosphate + (2E,6E)-farnesyl diphosphate = (2E,6E,10E)-geranylgeranyl diphosphate + diphosphate. Its function is as follows. Geranylgeranyl pyrophosphate synthase; part of the gene cluster 4 that mediates the biosynthesis of an isoprenoid secondary metabolite. This chain is Geranylgeranyl pyrophosphate synthase 1 (GGS1), found in Zymoseptoria tritici (strain CBS 115943 / IPO323) (Speckled leaf blotch fungus).